A 662-amino-acid chain; its full sequence is Threonine--tRNA ligase (662 aa).

The TGS domain occupies 1-64; sequence MSQSVSLTFP…ADGKIEIITR (64 aa). Positions 245–547 are catalytic; the sequence is DHRRLGREMD…LIENFAGHMP (303 aa). 3 residues coordinate Zn(2+): C341, H392, and H524.

The protein belongs to the class-II aminoacyl-tRNA synthetase family. As to quaternary structure, homodimer. Zn(2+) serves as cofactor.

Its subcellular location is the cytoplasm. It carries out the reaction tRNA(Thr) + L-threonine + ATP = L-threonyl-tRNA(Thr) + AMP + diphosphate + H(+). Its function is as follows. Catalyzes the attachment of threonine to tRNA(Thr) in a two-step reaction: L-threonine is first activated by ATP to form Thr-AMP and then transferred to the acceptor end of tRNA(Thr). Also edits incorrectly charged L-seryl-tRNA(Thr). This chain is Threonine--tRNA ligase, found in Rhizobium rhizogenes (strain K84 / ATCC BAA-868) (Agrobacterium radiobacter).